The chain runs to 987 residues: Ephrin type-B receptor 4 (987 aa).

Positions 1–15 are cleaved as a signal peptide; the sequence is MELRALLCWASLATA. Over 16 to 539 the chain is Extracellular; it reads LEETLLNTKL…ESESWREQLA (524 aa). Residues 17–202 form the Eph LBD domain; the sequence is EETLLNTKLE…FYKKCSWLIT (186 aa). 2 disulfides stabilise this stretch: Cys61-Cys184 and Cys97-Cys107. 3 N-linked (GlcNAc...) asparagine glycosylation sites follow: Asn203, Asn335, and Asn426. Fibronectin type-III domains lie at 323-432 and 436-529; these read PPSA…TDRE and AVSD…TQLD. Residues 540–560 traverse the membrane as a helical segment; it reads LIAGTAVVGVVLVLVVVIIAV. Topologically, residues 561-987 are cytoplasmic; it reads LCLRKQSNGR…GGTGGPAQQF (427 aa). The Protein kinase domain maps to 615–899; it reads VKIEEVIGAG…ENGGASHPLL (285 aa). Residues 621–629 and Lys647 contribute to the ATP site; that span reads IGAGEFGEV. Asp740 acts as the Proton acceptor in catalysis. 4 positions are modified to phosphoserine: Ser769, Ser770, Ser911, and Ser943. The SAM domain maps to 907–971; the sequence is SAFGSVGEWL…LASVQHMKSQ (65 aa). Positions 965–987 are disordered; it reads VQHMKSQAKPGAPGGTGGPAQQF. Over residues 976 to 987 the composition is skewed to gly residues; sequence APGGTGGPAQQF. A PDZ-binding motif is present at residues 985–987; it reads QQF.

This sequence belongs to the protein kinase superfamily. Tyr protein kinase family. Ephrin receptor subfamily. Heterotetramer upon binding of the ligand. The heterotetramer is composed of an ephrin dimer and a receptor dimer. Oligomerization is probably required to induce biological responses. Interacts with RASA1; the interaction depends on EPHB4 tyrosine-phosphorylation. Phosphorylated; autophosphorylation is stimulated by EFNB2. Expressed in various organ systems, including lung, liver, kidney, intestine, muscle and heart. Expressed in myogenic progenitor cells.

The protein localises to the cell membrane. It carries out the reaction L-tyrosyl-[protein] + ATP = O-phospho-L-tyrosyl-[protein] + ADP + H(+). Receptor tyrosine kinase which binds promiscuously transmembrane ephrin-B family ligands residing on adjacent cells, leading to contact-dependent bidirectional signaling into neighboring cells. The signaling pathway downstream of the receptor is referred to as forward signaling while the signaling pathway downstream of the ephrin ligand is referred to as reverse signaling. Together with its cognate ligand/functional ligand EFNB2 it is involved in the regulation of cell adhesion and migration, and plays a central role in heart morphogenesis, angiogenesis and blood vessel remodeling and permeability. EPHB4-mediated forward signaling controls cellular repulsion and segregation from EFNB2-expressing cells. The polypeptide is Ephrin type-B receptor 4 (Ephb4) (Mus musculus (Mouse)).